The following is a 700-amino-acid chain: DNA topoisomerase 1 (700 aa).

Residues 3-114 (KNLIIVESPA…TLPRIVFHEI (112 aa)) enclose the Toprim domain. Glu9 and Asp83 together coordinate Mg(2+). A Topo IA-type catalytic domain is found at 130–553 (NMHSVNAQQT…EFYYPFMRKI (424 aa)). The interval 164-169 (SAGRVQ) is interaction with DNA. Residue Tyr298 is the O-(5'-phospho-DNA)-tyrosine intermediate of the active site. C4-type zinc fingers lie at residues 573–599 (CPDCGGELAIRKGRFGEFVACLNFPKC), 629–656 (CPSCQKGEIVERFSKRGKFYGCSAYPKC), and 669–692 (CEECGETLVIKELKKGTFLECLKC).

The protein belongs to the type IA topoisomerase family. As to quaternary structure, monomer. The cofactor is Mg(2+).

The catalysed reaction is ATP-independent breakage of single-stranded DNA, followed by passage and rejoining.. Its function is as follows. Releases the supercoiling and torsional tension of DNA, which is introduced during the DNA replication and transcription, by transiently cleaving and rejoining one strand of the DNA duplex. Introduces a single-strand break via transesterification at a target site in duplex DNA. The scissile phosphodiester is attacked by the catalytic tyrosine of the enzyme, resulting in the formation of a DNA-(5'-phosphotyrosyl)-enzyme intermediate and the expulsion of a 3'-OH DNA strand. The free DNA strand then undergoes passage around the unbroken strand, thus removing DNA supercoils. Finally, in the religation step, the DNA 3'-OH attacks the covalent intermediate to expel the active-site tyrosine and restore the DNA phosphodiester backbone. This is DNA topoisomerase 1 from Campylobacter jejuni subsp. jejuni serotype O:2 (strain ATCC 700819 / NCTC 11168).